Reading from the N-terminus, the 332-residue chain is 6-phosphogluconolactonase (332 aa).

The protein belongs to the cycloisomerase 2 family.

It carries out the reaction 6-phospho-D-glucono-1,5-lactone + H2O = 6-phospho-D-gluconate + H(+). It participates in carbohydrate degradation; pentose phosphate pathway; D-ribulose 5-phosphate from D-glucose 6-phosphate (oxidative stage): step 2/3. In terms of biological role, catalyzes the hydrolysis of 6-phosphogluconolactone to 6-phosphogluconate. In Pectobacterium atrosepticum (strain SCRI 1043 / ATCC BAA-672) (Erwinia carotovora subsp. atroseptica), this protein is 6-phosphogluconolactonase.